A 335-amino-acid polypeptide reads, in one-letter code: DDRGK domain-containing protein 1 (335 aa).

Over 1–6 (MGDTYS) the chain is Lumenal. The helical transmembrane segment at 7–27 (LVLVAGYLSIFLFIGAIGYFY) threads the bilayer. Topologically, residues 28-335 (LSKPRIPSSN…NNDQDPVDTN (308 aa)) are cytoplasmic. The disordered stretch occupies residues 37 to 124 (NVNEQQQQQQ…GEDIGVVAPG (88 aa)). Low complexity-rich tracts occupy residues 41–56 (QQQQ…QQPQ) and 91–103 (SSGS…TNSD). A compositionally biased stretch (acidic residues) spans 104-117 (NYDDDNGQEGEGED).

It belongs to the DDRGK1 family.

The protein localises to the endoplasmic reticulum membrane. In terms of biological role, substrate adapter for ufmylation, the covalent attachment of the ubiquitin-like modifier UFM1 to substrate proteins. The protein is DDRGK domain-containing protein 1 of Dictyostelium discoideum (Social amoeba).